Reading from the N-terminus, the 601-residue chain is Potassium-transporting ATPase potassium-binding subunit (601 aa).

12 consecutive transmembrane segments (helical) span residues 6-26, 65-85, 136-156, 179-199, 283-303, 313-333, 367-387, 397-417, 419-439, 458-478, 524-544, and 566-586; these read IMLL…LGLF, SYAI…YAVQ, ALTG…FALI, LYIL…QGVI, FSNF…CFTF, GWAV…IVMT, FGIS…CGAV, MGGF…GGVG, GLYG…LMIG, SIAI…AVLV, MLAI…LAIA, and LFVA…YVPA.

It belongs to the KdpA family. In terms of assembly, the system is composed of three essential subunits: KdpA, KdpB and KdpC.

The protein localises to the cell inner membrane. In terms of biological role, part of the high-affinity ATP-driven potassium transport (or Kdp) system, which catalyzes the hydrolysis of ATP coupled with the electrogenic transport of potassium into the cytoplasm. This subunit binds the periplasmic potassium ions and delivers the ions to the membrane domain of KdpB through an intramembrane tunnel. The polypeptide is Potassium-transporting ATPase potassium-binding subunit (Herminiimonas arsenicoxydans).